Consider the following 363-residue polypeptide: tRNA-specific 2-thiouridylase MnmA (363 aa).

Residues 8–15 and Leu34 contribute to the ATP site; that span reads AMSGGVDS. Cys103 functions as the Nucleophile in the catalytic mechanism. The cysteines at positions 103 and 195 are disulfide-linked. Residue Gly127 coordinates ATP. The interval 145–147 is interaction with tRNA; it reads KDQ. The Cysteine persulfide intermediate role is filled by Cys195.

Belongs to the MnmA/TRMU family.

The protein localises to the cytoplasm. It carries out the reaction S-sulfanyl-L-cysteinyl-[protein] + uridine(34) in tRNA + AH2 + ATP = 2-thiouridine(34) in tRNA + L-cysteinyl-[protein] + A + AMP + diphosphate + H(+). In terms of biological role, catalyzes the 2-thiolation of uridine at the wobble position (U34) of tRNA, leading to the formation of s(2)U34. The protein is tRNA-specific 2-thiouridylase MnmA of Thermobifida fusca (strain YX).